Consider the following 241-residue polypeptide: MTKVITDPRSIRIKGRSFLAVMLSPDLPFDNWLIRLDDLAARSAGFFLGRPVVLDVTDLPIDRSQLKELIAELGQRNVSIMGIEGARPSILGPGMPAALKGGRAVSDFEVPEKEPTIELRSQPATVPEARPSVQSITIREPVRSGQSVIFPEGDVTVVGSVASGAEIVAGGSIHIYGTLRGRAMAGSLGKASAHIFCRKLEAELVAIDGIYKMAEDMPANLRGQAVQLWLEGDAIKAEKLI.

Belongs to the MinC family. In terms of assembly, interacts with MinD and FtsZ.

Cell division inhibitor that blocks the formation of polar Z ring septums. Rapidly oscillates between the poles of the cell to destabilize FtsZ filaments that have formed before they mature into polar Z rings. Prevents FtsZ polymerization. This Rhizobium rhizogenes (strain K84 / ATCC BAA-868) (Agrobacterium radiobacter) protein is Probable septum site-determining protein MinC.